The following is a 234-amino-acid chain: CKLF-like MARVEL transmembrane domain-containing protein 4 (234 aa).

Over residues M1–E11 the composition is skewed to acidic residues. The interval M1 to R38 is disordered. Low complexity predominate over residues S15–S25. An MARVEL domain is found at Y49–R176. The next 4 helical transmembrane spans lie at V59–S79, Y85–F105, L123–L143, and I151–A171. Position 194 is a phosphoserine (S194).

Belongs to the chemokine-like factor family. Interacts with PD-L1/CD274 and CMTM6. Highly expressed in testis and prostate.

The protein localises to the membrane. Acts as a backup for CMTM6 to regulate plasma membrane expression of PD-L1/CD274, an immune inhibitory ligand critical for immune tolerance to self and antitumor immunity. May protect PD-L1/CD274 from being polyubiquitinated and targeted for degradation. The polypeptide is CKLF-like MARVEL transmembrane domain-containing protein 4 (Homo sapiens (Human)).